The sequence spans 890 residues: Alanine--tRNA ligase (890 aa).

Residues histidine 568, histidine 572, cysteine 680, and histidine 684 each coordinate Zn(2+).

The protein belongs to the class-II aminoacyl-tRNA synthetase family. Zn(2+) serves as cofactor.

It localises to the cytoplasm. The enzyme catalyses tRNA(Ala) + L-alanine + ATP = L-alanyl-tRNA(Ala) + AMP + diphosphate. Functionally, catalyzes the attachment of alanine to tRNA(Ala) in a two-step reaction: alanine is first activated by ATP to form Ala-AMP and then transferred to the acceptor end of tRNA(Ala). Also edits incorrectly charged Ser-tRNA(Ala) and Gly-tRNA(Ala) via its editing domain. The polypeptide is Alanine--tRNA ligase (Psychrobacter arcticus (strain DSM 17307 / VKM B-2377 / 273-4)).